Reading from the N-terminus, the 226-residue chain is NADH-quinone oxidoreductase subunit C (226 aa).

The interval 1 to 21 (MTEPTGDQTPEIIGVRRGMFG) is disordered.

The protein belongs to the complex I 30 kDa subunit family. NDH-1 is composed of 14 different subunits. Subunits NuoB, C, D, E, F, and G constitute the peripheral sector of the complex.

It is found in the cell membrane. It carries out the reaction a quinone + NADH + 5 H(+)(in) = a quinol + NAD(+) + 4 H(+)(out). Functionally, NDH-1 shuttles electrons from NADH, via FMN and iron-sulfur (Fe-S) centers, to quinones in the respiratory chain. The immediate electron acceptor for the enzyme in this species is believed to be a menaquinone. Couples the redox reaction to proton translocation (for every two electrons transferred, four hydrogen ions are translocated across the cytoplasmic membrane), and thus conserves the redox energy in a proton gradient. This Mycolicibacterium gilvum (strain PYR-GCK) (Mycobacterium gilvum (strain PYR-GCK)) protein is NADH-quinone oxidoreductase subunit C.